Here is a 469-residue protein sequence, read N- to C-terminus: Aspartyl/glutamyl-tRNA(Asn/Gln) amidotransferase subunit B (469 aa).

It belongs to the GatB/GatE family. GatB subfamily. Heterotrimer of A, B and C subunits.

The enzyme catalyses L-glutamyl-tRNA(Gln) + L-glutamine + ATP + H2O = L-glutaminyl-tRNA(Gln) + L-glutamate + ADP + phosphate + H(+). The catalysed reaction is L-aspartyl-tRNA(Asn) + L-glutamine + ATP + H2O = L-asparaginyl-tRNA(Asn) + L-glutamate + ADP + phosphate + 2 H(+). In terms of biological role, allows the formation of correctly charged Asn-tRNA(Asn) or Gln-tRNA(Gln) through the transamidation of misacylated Asp-tRNA(Asn) or Glu-tRNA(Gln) in organisms which lack either or both of asparaginyl-tRNA or glutaminyl-tRNA synthetases. The reaction takes place in the presence of glutamine and ATP through an activated phospho-Asp-tRNA(Asn) or phospho-Glu-tRNA(Gln). In Methanococcus aeolicus (strain ATCC BAA-1280 / DSM 17508 / OCM 812 / Nankai-3), this protein is Aspartyl/glutamyl-tRNA(Asn/Gln) amidotransferase subunit B.